We begin with the raw amino-acid sequence, 941 residues long: Pre-mRNA-processing factor 6 (941 aa).

Positions 1–79 (MNKKKKPFLG…DEDLNDTNYD (79 aa)) are disordered. The span at 39 to 65 (DANDPVDDRHAPPGKRTVGDQMKKNQA) shows a compositional bias: basic and acidic residues. Residues 66-78 (ADDDDEDLNDTNY) show a composition bias toward acidic residues. At Ser-143 the chain carries Phosphoserine. A phosphothreonine mark is found at Thr-180, Thr-266, and Thr-275. Ser-279 is modified (phosphoserine). 9 HAT repeats span residues 384–416 (TDIR…LEEP), 418–444 (DARI…ARLE), 445–476 (TYEN…LEEA), 554–586 (NALE…FEKN), 588–620 (GTRE…SKWL), 622–654 (GDVP…LESE), 689–721 (GNIT…IEEQ), 723–755 (ELME…LEEK), and 855–887 (RKIT…FELQ).

As to quaternary structure, identified in the spliceosome B complex. Identified in the spliceosome C complex. Associates with the U5 snRNP particle. Component of the U4/U6-U5 tri-snRNP complex composed of the U4, U6 and U5 snRNAs and at least PRPF3, PRPF4, PRPF6, PRPF8, PRPF31, SNRNP200, TXNL4A, SNRNP40, DDX23, CD2BP2, PPIH, SNU13, EFTUD2, SART1 and USP39, LSm proteins LSm2-8 and Sm proteins. Interacts with ARAF1. Interacts with AR and NR3C1, but not ESR1, independently of the presence of hormones. Interacts with USH1G. Post-translationally, phosphorylated by PRP4K during spliceosome assembly.

The protein resides in the nucleus. It is found in the nucleoplasm. It localises to the nucleus speckle. Its function is as follows. Involved in pre-mRNA splicing as component of the U4/U6-U5 tri-snRNP complex, one of the building blocks of the spliceosome. Enhances dihydrotestosterone-induced transactivation activity of AR, as well as dexamethasone-induced transactivation activity of NR3C1, but does not affect estrogen-induced transactivation. This chain is Pre-mRNA-processing factor 6 (Prpf6), found in Rattus norvegicus (Rat).